Consider the following 136-residue polypeptide: Large ribosomal subunit protein uL16 (136 aa).

It belongs to the universal ribosomal protein uL16 family. As to quaternary structure, part of the 50S ribosomal subunit.

In terms of biological role, binds 23S rRNA and is also seen to make contacts with the A and possibly P site tRNAs. This is Large ribosomal subunit protein uL16 from Rickettsia bellii (strain OSU 85-389).